The primary structure comprises 352 residues: Chorismate synthase (352 aa).

Residue Arg48 participates in NADP(+) binding. FMN is bound by residues 125-127 (RSS), 237-238 (NA), Gly278, 293-297 (KPTSS), and Arg319.

The protein belongs to the chorismate synthase family. Homotetramer. The cofactor is FMNH2.

The catalysed reaction is 5-O-(1-carboxyvinyl)-3-phosphoshikimate = chorismate + phosphate. It participates in metabolic intermediate biosynthesis; chorismate biosynthesis; chorismate from D-erythrose 4-phosphate and phosphoenolpyruvate: step 7/7. Its function is as follows. Catalyzes the anti-1,4-elimination of the C-3 phosphate and the C-6 proR hydrogen from 5-enolpyruvylshikimate-3-phosphate (EPSP) to yield chorismate, which is the branch point compound that serves as the starting substrate for the three terminal pathways of aromatic amino acid biosynthesis. This reaction introduces a second double bond into the aromatic ring system. This chain is Chorismate synthase, found in Francisella tularensis subsp. mediasiatica (strain FSC147).